The primary structure comprises 566 residues: Protein kintoun (566 aa).

3 disordered regions span residues 183-298 (KYKG…TAPQ), 399-467 (EEEE…AETG), and 493-552 (QLEE…ESRI). Residues 208-290 (PQQTTGPQQP…HQPTDPQQTT (83 aa)) show a composition bias toward low complexity. Basic and acidic residues predominate over residues 399-424 (EEEERRAEEEESRKGGDEDGELHPDC). Low complexity predominate over residues 440–467 (TPAADTHTPAADTHTPAADTHTPAAETG). The span at 535-550 (DPAHTDPAHTDPEMES) shows a compositional bias: basic and acidic residues.

The protein belongs to the PIH1 family. Kintoun subfamily.

The protein localises to the cytoplasm. It localises to the dynein axonemal particle. Its function is as follows. Required for cytoplasmic pre-assembly of axonemal dyneins, thereby playing a central role in motility in cilia and flagella. Involved in pre-assembly of dynein arm complexes in the cytoplasm before intraflagellar transport loads them for the ciliary compartment. This is Protein kintoun from Danio rerio (Zebrafish).